Here is a 329-residue protein sequence, read N- to C-terminus: Probable cell division protein WhiA (329 aa).

A DNA-binding region (H-T-H motif) is located at residues 275-308 (SLEELGALADPPLTKDAVAGRIRRLLAMADKRAQ).

It belongs to the WhiA family.

Involved in cell division and chromosome segregation. The polypeptide is Probable cell division protein WhiA (Streptomyces avermitilis (strain ATCC 31267 / DSM 46492 / JCM 5070 / NBRC 14893 / NCIMB 12804 / NRRL 8165 / MA-4680)).